Consider the following 336-residue polypeptide: Alpha-glucoside transport system permease protein AglF (336 aa).

Helical transmembrane passes span 4 to 24 (LIAA…YFWS), 55 to 75 (PWLF…YPVV), 113 to 133 (FLWL…IAAL), 146 to 166 (LIFM…KFIY), 176 to 196 (IGLL…WITL), 202 to 222 (FFLM…ILSA), 258 to 278 (IAVV…IVLA), and 304 to 324 (FGRG…IMIW). The ABC transmembrane type-1 domain occupies 109-325 (IFNNFLWLLV…ILVVPIMIWN (217 aa)).

The protein belongs to the binding-protein-dependent transport system permease family. MalFG subfamily.

The protein resides in the cell inner membrane. Its function is as follows. Part of the binding-protein-dependent transport system for alpha-glucosides such as sucrose, maltose and trehalose. Probably responsible for the translocation of the substrate across the membrane. This chain is Alpha-glucoside transport system permease protein AglF (aglF), found in Rhizobium meliloti (strain 1021) (Ensifer meliloti).